A 145-amino-acid polypeptide reads, in one-letter code: UPF0179 protein Maeo_1037 (145 aa).

This sequence belongs to the UPF0179 family.

In Methanococcus aeolicus (strain ATCC BAA-1280 / DSM 17508 / OCM 812 / Nankai-3), this protein is UPF0179 protein Maeo_1037.